The chain runs to 1919 residues: Protein TIC 214 (1919 aa).

6 helical membrane passes run 18–38 (IINS…FSIG), 67–87 (FITG…HLAL), 90–110 (PHTI…WNNH), 127–147 (LSIQ…HFIL), 175–195 (VGWL…LVWI), and 224–244 (IFSI…PSPI). Disordered regions lie at residues 250–375 (KETP…GKEK), 1107–1129 (IKSI…NKRS), and 1606–1636 (ELKN…RRFV). Composition is skewed to acidic residues over residues 259–269 (GESEEETDVEI), 278–288 (GESEEETDVEI), 297–307 (GESEEETDVEI), 316–328 (GESE…EIET), and 355–366 (EKEDPDKIDETE). Positions 1107 to 1117 (IKSITKEKKKG) are enriched in basic residues. The span at 1606-1623 (ELKNRNQEEKEPADRGDL) shows a compositional bias: basic and acidic residues. Residues 1626–1636 (DAQNQGNRRFV) are compositionally biased toward polar residues.

The protein belongs to the TIC214 family. As to quaternary structure, part of the Tic complex.

The protein localises to the plastid. Its subcellular location is the chloroplast inner membrane. Its function is as follows. Involved in protein precursor import into chloroplasts. May be part of an intermediate translocation complex acting as a protein-conducting channel at the inner envelope. The polypeptide is Protein TIC 214 (Panax ginseng (Korean ginseng)).